A 211-amino-acid chain; its full sequence is Large ribosomal subunit protein uL4 (211 aa).

Positions 41-53 (QAHSRQGTASTLT) are enriched in polar residues. Positions 41-78 (QAHSRQGTASTLTRAEVRGGGRKPYKQKGTGRARQGTI) are disordered. Basic residues predominate over residues 60–71 (GGRKPYKQKGTG).

The protein belongs to the universal ribosomal protein uL4 family. In terms of assembly, part of the 50S ribosomal subunit.

One of the primary rRNA binding proteins, this protein initially binds near the 5'-end of the 23S rRNA. It is important during the early stages of 50S assembly. It makes multiple contacts with different domains of the 23S rRNA in the assembled 50S subunit and ribosome. In terms of biological role, forms part of the polypeptide exit tunnel. This chain is Large ribosomal subunit protein uL4, found in Prochlorococcus marinus (strain MIT 9313).